The sequence spans 193 residues: Flagellar transcriptional regulator FlhC (193 aa).

Residues C138, C141, C158, and C161 each coordinate Zn(2+).

It belongs to the FlhC family. Heterohexamer composed of two FlhC and four FlhD subunits. Each FlhC binds a FlhD dimer, forming a heterotrimer, and a hexamer assembles by dimerization of two heterotrimers. Zn(2+) is required as a cofactor.

It localises to the cytoplasm. Functionally, functions in complex with FlhD as a master transcriptional regulator that regulates transcription of several flagellar and non-flagellar operons by binding to their promoter region. Activates expression of class 2 flagellar genes, including fliA, which is a flagellum-specific sigma factor that turns on the class 3 genes. Also regulates genes whose products function in a variety of physiological pathways. The protein is Flagellar transcriptional regulator FlhC of Yersinia enterocolitica.